Reading from the N-terminus, the 739-residue chain is Adenosylcobalamin-dependent ribonucleoside-triphosphate reductase (739 aa).

The cysteines at positions 119 and 419 are disulfide-linked. The interval 147–158 (SMPFSFLFDELM) is effector region-1. The tract at residues 168–313 (ARSNISQIPR…ICNLIGKAVV (146 aa)) is effector region-2. Residues Cys408 and Glu410 contribute to the active site. Residues 565-626 (FHYGAYLIQR…NPNFASAGTV (62 aa)) form an adenosylcobalamin-binding-1 region. The interval 685-724 (LQQAPKEPIDKETYEKRSQEITGNVEEVFSQLNSDVKDLE) is adenosylcobalamin-binding-2.

Belongs to the class II ribonucleoside-triphosphate reductase family. Monomer. Adenosylcob(III)alamin serves as cofactor.

The enzyme catalyses a 2'-deoxyribonucleoside 5'-triphosphate + [thioredoxin]-disulfide + H2O = a ribonucleoside 5'-triphosphate + [thioredoxin]-dithiol. Its activity is regulated as follows. Allosterically regulated by ATP and dNTP. This Lactobacillus leichmannii protein is Adenosylcobalamin-dependent ribonucleoside-triphosphate reductase (rtpR).